The sequence spans 299 residues: Polyamine aminopropyltransferase (299 aa).

Residues 6-252 form the PABS domain; the sequence is IVLLFALLCT…SLPNQQALQQ (247 aa). S-methyl-5'-thioadenosine is bound by residues Gln36, Glu120, and 147-148; that span reads DA. Asp168 functions as the Proton acceptor in the catalytic mechanism.

Belongs to the spermidine/spermine synthase family. In terms of assembly, homodimer or homotetramer.

It is found in the cytoplasm. It carries out the reaction S-adenosyl 3-(methylsulfanyl)propylamine + putrescine = S-methyl-5'-thioadenosine + spermidine + H(+). Its pathway is amine and polyamine biosynthesis; spermidine biosynthesis; spermidine from putrescine: step 1/1. In terms of biological role, catalyzes the irreversible transfer of a propylamine group from the amino donor S-adenosylmethioninamine (decarboxy-AdoMet) to putrescine (1,4-diaminobutane) to yield spermidine. The sequence is that of Polyamine aminopropyltransferase from Vibrio vulnificus (strain CMCP6).